Here is a 274-residue protein sequence, read N- to C-terminus: Energy-coupling factor transporter ATP-binding protein EcfA1 (274 aa).

Positions 10 to 241 (ASFQGVYFSY…AAELQKIRLD (232 aa)) constitute an ABC transporter domain. ATP is bound at residue 42 to 49 (GHNGSGKS).

The protein belongs to the ABC transporter superfamily. Energy-coupling factor EcfA family. In terms of assembly, forms a stable energy-coupling factor (ECF) transporter complex composed of 2 membrane-embedded substrate-binding proteins (S component), 2 ATP-binding proteins (A component) and 2 transmembrane proteins (T component).

The protein localises to the cell membrane. Its function is as follows. ATP-binding (A) component of a common energy-coupling factor (ECF) ABC-transporter complex. Unlike classic ABC transporters this ECF transporter provides the energy necessary to transport a number of different substrates. The polypeptide is Energy-coupling factor transporter ATP-binding protein EcfA1 (Mycoplasma pneumoniae (strain ATCC 29342 / M129 / Subtype 1) (Mycoplasmoides pneumoniae)).